A 429-amino-acid polypeptide reads, in one-letter code: Putative protease Do-like 14 (429 aa).

The interval 87–113 (KSEAPINDEKGVSVEASDSSSKPSNGY) is disordered. The segment at 113 to 338 (YLGRDTIANA…IRPWIGLKMV (226 aa)) is serine protease. Residues His165, Asp203, and Ser281 each act as charge relay system in the active site. A PDZ domain is found at 318-424 (IIEHFKKSGR…RVTLEVIPEE (107 aa)).

This sequence belongs to the peptidase S1C family.

Functionally, putative serine protease. In Arabidopsis thaliana (Mouse-ear cress), this protein is Putative protease Do-like 14 (DEGP14).